The sequence spans 39 residues: Contryphan-Cal2 (39 aa).

The first 20 residues, 1–20, serve as a signal peptide directing secretion; that stretch reads MTRTAVLLLTLLFLVAMAAS. The cysteines at positions 29 and 35 are disulfide-linked.

In terms of tissue distribution, expressed by the venom duct.

It localises to the secreted. Functionally, probable neurotoxin. The sequence is that of Contryphan-Cal2 from Californiconus californicus (California cone).